The sequence spans 187 residues: MNRGKALQLVKPHLTEHRYQHTIGVMETAIDLAKLYGADQQKAELAAIFHDYAKFRDKNEMRTLIREKLSQQDILFYGDELLHAPCGAYYVREEVGIEDEDVLQAIRFHTTGRPNMSLLEKIIFLADYIEPNRQFPGVEKVRTQAKTDLNGAIISSLVNTITFLLKKNQPIYPDTLATYNQLLLEQK.

The HD domain occupies 18–132 (RYQHTIGVME…IFLADYIEPN (115 aa)). Residue His-21 participates in ADP binding. Residues His-21, His-50, and Asp-51 each contribute to the Fe cation site. ADP contacts are provided by residues 51 to 54 (DYAK), His-83, 109 to 110 (HT), Asp-127, Arg-133, and 170 to 175 (PIYPDT). Position 127 (Asp-127) interacts with Fe cation.

The protein belongs to the Ap4A hydrolase YqeK family. As to quaternary structure, homodimer.

The catalysed reaction is P(1),P(4)-bis(5'-adenosyl) tetraphosphate + H2O = 2 ADP + 2 H(+). In terms of biological role, hydrolyzes diadenosine 5',5'''-P1,P4-tetraphosphate (Ap4A) to yield ADP. This Halalkalibacterium halodurans (strain ATCC BAA-125 / DSM 18197 / FERM 7344 / JCM 9153 / C-125) (Bacillus halodurans) protein is Bis(5'-nucleosyl)-tetraphosphatase, symmetrical.